The following is a 757-amino-acid chain: 5-methyltetrahydropteroyltriglutamate--homocysteine methyltransferase (757 aa).

Residues 16-19 and lysine 112 each bind 5-methyltetrahydropteroyltri-L-glutamate; that span reads RELK. Residues 432 to 434 and glutamate 485 each bind L-homocysteine; that span reads IGS. L-methionine is bound by residues 432–434 and glutamate 485; that span reads IGS. 5-methyltetrahydropteroyltri-L-glutamate is bound by residues 516–517 and tryptophan 562; that span reads RC. Residue aspartate 600 coordinates L-homocysteine. Position 600 (aspartate 600) interacts with L-methionine. Residue glutamate 606 coordinates 5-methyltetrahydropteroyltri-L-glutamate. Zn(2+)-binding residues include histidine 642, cysteine 644, and glutamate 666. Histidine 695 (proton donor) is an active-site residue. Position 727 (cysteine 727) interacts with Zn(2+).

This sequence belongs to the vitamin-B12 independent methionine synthase family. It depends on Zn(2+) as a cofactor.

It catalyses the reaction 5-methyltetrahydropteroyltri-L-glutamate + L-homocysteine = tetrahydropteroyltri-L-glutamate + L-methionine. It functions in the pathway amino-acid biosynthesis; L-methionine biosynthesis via de novo pathway; L-methionine from L-homocysteine (MetE route): step 1/1. Functionally, catalyzes the transfer of a methyl group from 5-methyltetrahydrofolate to homocysteine resulting in methionine formation. The sequence is that of 5-methyltetrahydropteroyltriglutamate--homocysteine methyltransferase from Actinobacillus pleuropneumoniae serotype 7 (strain AP76).